The following is a 710-amino-acid chain: U3 small nucleolar RNA-associated protein 4 (710 aa).

9 WD repeats span residues Tyr-11 to Thr-59, Gly-64 to Asn-105, Ser-108 to Glu-147, Arg-154 to Ile-192, Arg-199 to Ser-241, Phe-290 to Asn-327, Arg-328 to Ile-365, Ser-488 to Leu-527, and Arg-529 to Trp-569.

As to quaternary structure, component of the ribosomal small subunit (SSU) processome.

The protein resides in the nucleus. It is found in the nucleolus. Its function is as follows. Involved in nucleolar processing of pre-18S ribosomal RNA. Required for optimal pre-ribosomal RNA transcription by RNA polymerase I together with a subset of U3 proteins required for transcription (t-UTPs). The sequence is that of U3 small nucleolar RNA-associated protein 4 (utp4) from Schizosaccharomyces pombe (strain 972 / ATCC 24843) (Fission yeast).